We begin with the raw amino-acid sequence, 406 residues long: NIPA-like protein 3 (406 aa).

Transmembrane regions (helical) follow at residues 33-53 (NLIGALLAIFGHLVVSIALNL), 76-96 (WWLGLFLMLLGELGVFASYAF), 101-121 (LIVPLSAVSVIASAIIGIIFI), and 135-155 (ILSFVGCGLAVVGTYLLVTFA). Residue N166 is glycosylated (N-linked (GlcNAc...) asparagine). The next 5 helical transmembrane spans lie at 171–191 (LVSWPFLLYMLVEIILFCLLL), 202–222 (IVVILLLVALLGSMTVVTVKA), 240–260 (PIFYVMFVCMVATAVYQAAFL), 271–291 (LIASVGYILSTTIAITAGAIF), and 300–320 (VLHICMFALGCLIAFLGVFLI). The residue at position 372 (S372) is a Phosphoserine.

It belongs to the NIPA family.

Its subcellular location is the membrane. This Pongo abelii (Sumatran orangutan) protein is NIPA-like protein 3 (NIPAL3).